The following is a 366-amino-acid chain: 3-dehydroquinate synthase (366 aa).

NAD(+) contacts are provided by residues 69-74, 103-107, 127-128, K140, and K149; these read DGEAFK, GVIGD, and TT. 3 residues coordinate Zn(2+): E182, H245, and H262.

Belongs to the sugar phosphate cyclases superfamily. Dehydroquinate synthase family. Co(2+) serves as cofactor. The cofactor is Zn(2+). NAD(+) is required as a cofactor.

It is found in the cytoplasm. The enzyme catalyses 7-phospho-2-dehydro-3-deoxy-D-arabino-heptonate = 3-dehydroquinate + phosphate. The protein operates within metabolic intermediate biosynthesis; chorismate biosynthesis; chorismate from D-erythrose 4-phosphate and phosphoenolpyruvate: step 2/7. Functionally, catalyzes the conversion of 3-deoxy-D-arabino-heptulosonate 7-phosphate (DAHP) to dehydroquinate (DHQ). The polypeptide is 3-dehydroquinate synthase (Pseudomonas fluorescens (strain Pf0-1)).